The primary structure comprises 312 residues: Methionyl-tRNA formyltransferase (312 aa).

109–112 (SLLP) lines the (6S)-5,6,7,8-tetrahydrofolate pocket.

This sequence belongs to the Fmt family.

The enzyme catalyses L-methionyl-tRNA(fMet) + (6R)-10-formyltetrahydrofolate = N-formyl-L-methionyl-tRNA(fMet) + (6S)-5,6,7,8-tetrahydrofolate + H(+). Attaches a formyl group to the free amino group of methionyl-tRNA(fMet). The formyl group appears to play a dual role in the initiator identity of N-formylmethionyl-tRNA by promoting its recognition by IF2 and preventing the misappropriation of this tRNA by the elongation apparatus. The protein is Methionyl-tRNA formyltransferase of Nitrosospira multiformis (strain ATCC 25196 / NCIMB 11849 / C 71).